The chain runs to 748 residues: Transcription factor hmgR (748 aa).

Residues 24–59 (CISCRQRKAKCDLGTGPDGLPLGPPCAKCRREQKPC) constitute a DNA-binding region (zn(2)-C6 fungal-type). Disordered regions lie at residues 108-142 (SQED…QIDL) and 661-683 (REST…DEHA).

It is found in the nucleus. Functionally, transcription factor; part of the L-tyrosine degradation gene cluster that mediates the biosynthesis of the brownish pigment pyomelanin as an alternative melanin. Acts as a transcriptional activator for the genes of the tyrosine degradation cluster. In Aspergillus fumigatus (strain ATCC MYA-4609 / CBS 101355 / FGSC A1100 / Af293) (Neosartorya fumigata), this protein is Transcription factor hmgR.